A 170-amino-acid chain; its full sequence is Adenine phosphoribosyltransferase (170 aa).

Belongs to the purine/pyrimidine phosphoribosyltransferase family. As to quaternary structure, homodimer.

It is found in the cytoplasm. The catalysed reaction is AMP + diphosphate = 5-phospho-alpha-D-ribose 1-diphosphate + adenine. The protein operates within purine metabolism; AMP biosynthesis via salvage pathway; AMP from adenine: step 1/1. In terms of biological role, catalyzes a salvage reaction resulting in the formation of AMP, that is energically less costly than de novo synthesis. The chain is Adenine phosphoribosyltransferase from Kosmotoga olearia (strain ATCC BAA-1733 / DSM 21960 / TBF 19.5.1).